The sequence spans 425 residues: Putative E3 ubiquitin-protein ligase UBR7 (425 aa).

The UBR-type zinc finger occupies 44-116; the sequence is EKCSYSQGSV…KNLECKLLPD (73 aa). Residues 132–188 form a PHD-type; atypical zinc finger; the sequence is GLYCICKRPYPDPEDEIPDEMIQCVVCEDWFHGRHLGAIPPESGDFQEMVCQACMKR. Glycyl lysine isopeptide (Lys-Gly) (interchain with G-Cter in SUMO2) cross-links involve residues Lys225 and Lys252. The tract at residues 225–246 is disordered; sequence KPENGEHQDSTLKEDVPEQGKD. At Ser264 the chain carries Phosphoserine. Lys274 is covalently cross-linked (Glycyl lysine isopeptide (Lys-Gly) (interchain with G-Cter in SUMO2)). Ser354 carries the phosphoserine modification. A Glycyl lysine isopeptide (Lys-Gly) (interchain with G-Cter in SUMO2) cross-link involves residue Lys398.

Expressed in sperm (at protein level).

It catalyses the reaction S-ubiquitinyl-[E2 ubiquitin-conjugating enzyme]-L-cysteine + [acceptor protein]-L-lysine = [E2 ubiquitin-conjugating enzyme]-L-cysteine + N(6)-ubiquitinyl-[acceptor protein]-L-lysine.. It functions in the pathway protein modification; protein ubiquitination. Functionally, E3 ubiquitin-protein ligase which is a component of the N-end rule pathway. Recognizes and binds to proteins bearing specific N-terminal residues that are destabilizing according to the N-end rule, leading to their ubiquitination and subsequent degradation. This is Putative E3 ubiquitin-protein ligase UBR7 (UBR7) from Homo sapiens (Human).